The sequence spans 34 residues: Turripeptide Pal9a (34 aa).

3 disulfide bridges follow: C3–C17, C8–C19, and C13–C30. The residue at position 34 (Q34) is a Glutamine amide.

In terms of tissue distribution, expressed by the venom duct.

It is found in the secreted. The chain is Turripeptide Pal9a from Polystira albida (White giant-turris).